The chain runs to 279 residues: MKTKTDFFKMKQENEPIVMLTAYDFPSAKLAEAAGVDMILVGDSLGMVVLGYDSTIPVTVEDMIHHTKAVRRGAPNTFIVTDMPFMSYHLSMEEALRNAQRIMQESGANAVKVEGADDVVNVIRAFTKAGVPVVAHLGLTPQSVGVLGGYKVQGKDAESARKLIEDAKLCEEAGAIALVLECVPKQIAAEITKQLTIPTIGIGAGDEVDGQVLVYHDVLGYGVDRVPKFVKKYANIQETISHALANYIADVKLRQFPEATHMFTMKEEEWIALYGGKRT.

Positions 43 and 82 each coordinate Mg(2+). Residues 43 to 44 (DS), Asp82, and Lys112 contribute to the 3-methyl-2-oxobutanoate site. Residue Glu114 coordinates Mg(2+). Glu181 acts as the Proton acceptor in catalysis.

The protein belongs to the PanB family. In terms of assembly, homodecamer; pentamer of dimers. The cofactor is Mg(2+).

It is found in the cytoplasm. It carries out the reaction 3-methyl-2-oxobutanoate + (6R)-5,10-methylene-5,6,7,8-tetrahydrofolate + H2O = 2-dehydropantoate + (6S)-5,6,7,8-tetrahydrofolate. It participates in cofactor biosynthesis; (R)-pantothenate biosynthesis; (R)-pantoate from 3-methyl-2-oxobutanoate: step 1/2. Its function is as follows. Catalyzes the reversible reaction in which hydroxymethyl group from 5,10-methylenetetrahydrofolate is transferred onto alpha-ketoisovalerate to form ketopantoate. The chain is 3-methyl-2-oxobutanoate hydroxymethyltransferase from Geobacillus sp. (strain WCH70).